A 105-amino-acid chain; its full sequence is Iron-sulfur cluster assembly protein CyaY (105 aa).

The protein belongs to the frataxin family.

In terms of biological role, involved in iron-sulfur (Fe-S) cluster assembly. May act as a regulator of Fe-S biogenesis. The sequence is that of Iron-sulfur cluster assembly protein CyaY from Photobacterium profundum (strain SS9).